The primary structure comprises 344 residues: Fructose-bisphosphate aldolase (344 aa).

Position 53 (S53) interacts with D-glyceraldehyde 3-phosphate. The Proton donor role is filled by D95. Residues H96, D131, E161, and H212 each contribute to the Zn(2+) site. G213 contacts dihydroxyacetone phosphate. H252 serves as a coordination point for Zn(2+). Dihydroxyacetone phosphate is bound by residues 253–255 (GGS) and 274–277 (NVDT).

Belongs to the class II fructose-bisphosphate aldolase family. Requires Zn(2+) as cofactor.

It catalyses the reaction beta-D-fructose 1,6-bisphosphate = D-glyceraldehyde 3-phosphate + dihydroxyacetone phosphate. It functions in the pathway carbohydrate degradation; glycolysis; D-glyceraldehyde 3-phosphate and glycerone phosphate from D-glucose: step 4/4. Functionally, catalyzes the aldol condensation of dihydroxyacetone phosphate (DHAP or glycerone-phosphate) with glyceraldehyde 3-phosphate (G3P) to form fructose 1,6-bisphosphate (FBP) in gluconeogenesis and the reverse reaction in glycolysis. The protein is Fructose-bisphosphate aldolase (fba) of Corynebacterium glutamicum (strain ATCC 13032 / DSM 20300 / JCM 1318 / BCRC 11384 / CCUG 27702 / LMG 3730 / NBRC 12168 / NCIMB 10025 / NRRL B-2784 / 534).